The sequence spans 382 residues: Acetyltransferase eriL (382 aa).

A run of 6 helical transmembrane segments spans residues 5 to 25 (LQPL…LGAV), 33 to 53 (ALLF…TTTG), 59 to 79 (IVTW…LLIN), 146 to 166 (TLFY…SPVF), 192 to 212 (LWSY…ALGV), and 335 to 355 (GYMW…DPQF).

The protein belongs to the wax synthase family.

The protein resides in the membrane. The enzyme catalyses cyathatriol + acetyl-CoA = 11-O-acetylcyathatriol + CoA. It catalyses the reaction cyathin A3 + acetyl-CoA = 11-O-acetylcyathin A3 + CoA. Its pathway is secondary metabolite biosynthesis. Its function is as follows. Acetyltransferase; part of the gene cluster that mediates the biosynthesis of erinacines, cyathane-xylosides that show unique biological activities, including leishmanicidal activity, stimulating activity for nerve growth-factor synthesis, and agonistic activity toward the kappa opioid receptor. Within the pathway, eriL converts cyathatriol into 11-O-acetyl-cyathatriol. EriL is also able to acetylate cyathin A3 to produce 11-O-acetylcyathin A3. The first step of the erinacines biosynthesis pathway is catalyzed by the geranylgeranyl diphosphate (GGPP) synthase eriE via conversion of farnesyl pyrophosphate and isopentyl pyrophosphate into geranylgeranyl pyrophosphate (GGPP). GGPP is then substrate of the diterpene cyclase eriG for the production of cyatha-3,12-diene. The cytochrome P450 monooxygenase eriI then hydroxylates cyatha-3,12-diene at C-14 of the seven-membered ring to produce erinacol, which is further hydroxylated at C-15 by the cytochrome P450 monooxygenase eriC to yield cyathadiol. The cytochrome P450 monooxygenase eriA then catalyzes C-11 hydroxylation in the presence of the short chain dehydrogenase/reductase (SDR) eriH, which leads to the production of cyathatriol. The acetyltransferase eriL converts cyathatriol into 11-O-acetyl-cyathatriol. The SDR eriH catalyzes further oxidation of 11-O-acetyl-cyathatriol into 1-O-acetylcyathin A3. Finally, the glycosyl transferase eriJ tranfers xylose from UDP-xylose onto C-14 of 11-O-acetyl-cyathatriol to form eracine Q. EriJ is also able to convert 11-O-acetyl-cyathatriol to eracine Q2 by using UDP-D-glucose as cosubstrate, but at a lower rate. The sequence is that of Acetyltransferase eriL from Hericium erinaceus (Lion's mane mushroom).